Reading from the N-terminus, the 84-residue chain is Small ribosomal subunit protein bS16 (84 aa).

Belongs to the bacterial ribosomal protein bS16 family.

The chain is Small ribosomal subunit protein bS16 from Desulforapulum autotrophicum (strain ATCC 43914 / DSM 3382 / VKM B-1955 / HRM2) (Desulfobacterium autotrophicum).